The sequence spans 232 residues: uncharacterized protein (232 aa).

The next 7 membrane-spanning stretches (helical) occupy residues 17–37 (FLAK…VFAY), 54–74 (MSFM…SGAL), 84–104 (ALFL…FMIY), 107–127 (GSIV…SVYG), 138–158 (GSYL…NMFF), 161–181 (SGLN…LTAY), and 203–223 (MAVV…LYLL).

The protein belongs to the BI1 family.

It localises to the cell membrane. This is an uncharacterized protein from Borreliella burgdorferi (strain ATCC 35210 / DSM 4680 / CIP 102532 / B31) (Borrelia burgdorferi).